A 41-amino-acid chain; its full sequence is MKIRNSLKSLRGRHRDNQLVRRKGRVYVINKTQKRFKARQG.

The protein belongs to the bacterial ribosomal protein bL36 family.

The protein is Large ribosomal subunit protein bL36 of Methylorubrum extorquens (strain CM4 / NCIMB 13688) (Methylobacterium extorquens).